A 260-amino-acid polypeptide reads, in one-letter code: Transmembrane protein 106C (260 aa).

A lipid anchor (N-myristoyl glycine) is attached at Gly-2. Residues Tyr-85–Phe-105 traverse the membrane as a helical segment. N-linked (GlcNAc...) asparagine glycosylation occurs at Asn-184. Residues Ser-196–Met-216 traverse the membrane as a helical segment.

Belongs to the TMEM106 family. In terms of assembly, interacts with TMEM106B.

The protein resides in the endoplasmic reticulum membrane. Its subcellular location is the membrane. The protein is Transmembrane protein 106C (Tmem106c) of Mus musculus (Mouse).